A 181-amino-acid polypeptide reads, in one-letter code: Adenine phosphoribosyltransferase (181 aa).

The protein belongs to the purine/pyrimidine phosphoribosyltransferase family. Homodimer.

Its subcellular location is the cytoplasm. It catalyses the reaction AMP + diphosphate = 5-phospho-alpha-D-ribose 1-diphosphate + adenine. It participates in purine metabolism; AMP biosynthesis via salvage pathway; AMP from adenine: step 1/1. Catalyzes a salvage reaction resulting in the formation of AMP, that is energically less costly than de novo synthesis. The chain is Adenine phosphoribosyltransferase from Neorhizobium galegae (Rhizobium galegae).